Reading from the N-terminus, the 501-residue chain is Lysine--tRNA ligase (501 aa).

E411 and E418 together coordinate Mg(2+).

Belongs to the class-II aminoacyl-tRNA synthetase family. Homodimer. It depends on Mg(2+) as a cofactor.

It localises to the cytoplasm. The enzyme catalyses tRNA(Lys) + L-lysine + ATP = L-lysyl-tRNA(Lys) + AMP + diphosphate. This Thiobacillus denitrificans (strain ATCC 25259 / T1) protein is Lysine--tRNA ligase.